Consider the following 602-residue polypeptide: Cytoskeleton-associated protein 4 (602 aa).

The disordered stretch occupies residues 1–83 (MPSAKQRGSK…GGGGKSSSSS (83 aa)). Topologically, residues 1–106 (MPSAKQRGSK…SASCSRRLGR (106 aa)) are cytoplasmic. Phosphoserine is present on residues serine 3, serine 17, and serine 19. Lysine 21 carries the N6-acetyllysine modification. Positions 35–52 (KPPPAPQQPPPPPAPHPQ) are enriched in pro residues. A compositionally biased stretch (low complexity) spans 53–64 (QHPQQHPQNQAH). Cysteine 100 carries S-palmitoyl cysteine; by ZDHHC2 lipidation. A helical transmembrane segment spans residues 107–127 (ALNFLFYLALVAAAAFSGWCV). At 128–602 (HHVLEEVQQV…VKVEKIHEKV (475 aa)) the chain is on the extracellular side. Positions 130 to 214 (VLEEVQQVRR…QKLQNEILKD (85 aa)) form a coiled coil. Serine 232 is modified (phosphoserine; by FAM20C). Coiled-coil stretches lie at residues 256 to 460 (TEVQ…GLGS) and 533 to 602 (LSSL…HEKV). Serine 312 bears the Phosphoserine mark.

As to quaternary structure, interacts with REEP5. Reversibly palmitoylated. Palmitoylation at Cys-100 by ZDHHC2 is required for its trafficking from the ER to the plasma membrane and for its perinuclear localization. Palmitoylation by ZDHHC2 is also required for its function in APF-mediated antiproliferative signaling. Post-translationally, increased phosphorylation during mitosis prevents binding to microtubules.

Its subcellular location is the endoplasmic reticulum membrane. It is found in the cell membrane. It localises to the cytoplasm. The protein resides in the cytoskeleton. The protein localises to the perinuclear region. Functionally, mediates the anchoring of the endoplasmic reticulum to microtubules. In terms of biological role, high-affinity epithelial cell surface receptor for the FZD8-related low molecular weight sialoglycopeptide APF/antiproliferative factor. Mediates the APF antiproliferative signaling within cells. The sequence is that of Cytoskeleton-associated protein 4 (CKAP4) from Homo sapiens (Human).